The primary structure comprises 1032 residues: Exportin-T (1032 aa).

It belongs to the exportin family.

It is found in the nucleus. Its subcellular location is the cytoplasm. TRNA nucleus export receptor which facilitates tRNA translocation across the nuclear pore complex. Involved in pre-tRNA splicing, probably by affecting the interaction of pre-tRNA with splicing endonuclease. The chain is Exportin-T (los1) from Aspergillus fumigatus (strain CBS 144.89 / FGSC A1163 / CEA10) (Neosartorya fumigata).